Consider the following 726-residue polypeptide: F-box protein COS111 (726 aa).

Residues F143–T194 enclose the F-box domain. The tract at residues R276–H295 is disordered. The segment covering D284 to H295 has biased composition (low complexity).

Its function is as follows. F-box protein probably involved in ubiquitin conjugation pathway. The polypeptide is F-box protein COS111 (COS111) (Kluyveromyces lactis (strain ATCC 8585 / CBS 2359 / DSM 70799 / NBRC 1267 / NRRL Y-1140 / WM37) (Yeast)).